The primary structure comprises 390 residues: MQFKKLTEQSLAGKRVLIRVDMNVPVKNGVIGDDTRIRASLPSILHCLKAGASVILMTHLGRPTEGEPKPEDSLAPVARRLSELLAQEVKVIADWQAGIDLKAGDVVMLENVRLNKGEKKNNEELGRAYAGLCDVFVNDAFGTAHRAEASTHAVAQFAPVACAGVLLAAELDALGRALEAPARPLVAIVAGSKVSTKLTILEALADKVDQLIVGGGIANTFLLAEGKNIGKSLAEADLVGEAKKVIEKIRAHGGNVPLPTDVVVAPEFSENAEDTLKNVADVTRDDMILDIGPDSARVLAEIVAKAGTVVWNGPVGVFEFEQFSHGTRTLAEAIAESKAFSIAGGGDTLSAIAKFGVTDRISYISTGGGAFLEFLEGKELPAVAMLAARA.

Residues 21–23 (DMN), Arg-36, 59–62 (HLGR), Arg-113, and Arg-146 contribute to the substrate site. ATP is bound by residues Lys-197, Glu-319, and 345-348 (GGDT).

The protein belongs to the phosphoglycerate kinase family. As to quaternary structure, monomer.

Its subcellular location is the cytoplasm. The catalysed reaction is (2R)-3-phosphoglycerate + ATP = (2R)-3-phospho-glyceroyl phosphate + ADP. The protein operates within carbohydrate degradation; glycolysis; pyruvate from D-glyceraldehyde 3-phosphate: step 2/5. This Laribacter hongkongensis (strain HLHK9) protein is Phosphoglycerate kinase.